A 346-amino-acid polypeptide reads, in one-letter code: Extracellular protease (346 aa).

Positions 1-21 (MMKATPIALLLAGVLASPLCA) are cleaved as a signal peptide. Zn(2+) is bound at residue His-296. Glu-297 is a catalytic residue. Zn(2+)-binding residues include His-300 and Asp-309.

The protein belongs to the peptidase M35 family. Zn(2+) serves as cofactor.

In terms of biological role, heat-labile protease. The sequence is that of Extracellular protease from Aeromonas hydrophila.